Consider the following 187-residue polypeptide: Elongation factor P (187 aa).

This sequence belongs to the elongation factor P family.

The protein resides in the cytoplasm. It participates in protein biosynthesis; polypeptide chain elongation. Its function is as follows. Involved in peptide bond synthesis. Stimulates efficient translation and peptide-bond synthesis on native or reconstituted 70S ribosomes in vitro. Probably functions indirectly by altering the affinity of the ribosome for aminoacyl-tRNA, thus increasing their reactivity as acceptors for peptidyl transferase. In Chelativorans sp. (strain BNC1), this protein is Elongation factor P.